The following is a 95-amino-acid chain: Small ribosomal subunit protein bS18 (95 aa).

Belongs to the bacterial ribosomal protein bS18 family. In terms of assembly, part of the 30S ribosomal subunit. Forms a tight heterodimer with protein bS6.

Its function is as follows. Binds as a heterodimer with protein bS6 to the central domain of the 16S rRNA, where it helps stabilize the platform of the 30S subunit. The chain is Small ribosomal subunit protein bS18 from Rickettsia peacockii (strain Rustic).